Consider the following 60-residue polypeptide: Large ribosomal subunit protein bL32 (60 aa).

A disordered region spans residues 1 to 60 (MAVQQNKKTPSKRGMHRSHDFLVAPQLSVEPTTGETHMRHHISPNGFYRGRKVLKTKNDE). Positions 49–60 (RGRKVLKTKNDE) are enriched in basic residues.

It belongs to the bacterial ribosomal protein bL32 family.

This is Large ribosomal subunit protein bL32 from Janthinobacterium sp. (strain Marseille) (Minibacterium massiliensis).